We begin with the raw amino-acid sequence, 486 residues long: Portal protein (486 aa).

The tract at residues 456–486 (MVDADPTVPGSPSPTAPPKPQPAIESSGGDA) is disordered. Positions 464–476 (PGSPSPTAPPKPQ) are enriched in pro residues.

This sequence belongs to the SPP1-like portal protein family. As to quaternary structure, homododecamer.

The protein localises to the virion. Functionally, forms the portal vertex of the capsid. This portal plays critical roles in head assembly, genome packaging, neck/tail attachment, and genome ejection. The portal protein multimerizes as a single ring-shaped homododecamer arranged around a central channel. Binds to the terminase subunits to form the packaging machine. This Mycobacterium phage L5 (Mycobacteriophage L5) protein is Portal protein (14).